A 178-amino-acid chain; its full sequence is Interleukin-10 (178 aa).

An N-terminal signal peptide occupies residues M1–T18. Residue N29 is glycosylated (N-linked (GlcNAc...) asparagine). 2 disulfides stabilise this stretch: C30/C126 and C80/C132. N134 is a glycosylation site (N-linked (GlcNAc...) asparagine).

It belongs to the IL-10 family. In terms of assembly, homodimer. Interacts with IL10RA and IL10RB.

Its subcellular location is the secreted. Its function is as follows. Major immune regulatory cytokine that acts on many cells of the immune system where it has profound anti-inflammatory functions, limiting excessive tissue disruption caused by inflammation. Mechanistically, IL10 binds to its heterotetrameric receptor comprising IL10RA and IL10RB leading to JAK1 and STAT2-mediated phosphorylation of STAT3. In turn, STAT3 translocates to the nucleus where it drives expression of anti-inflammatory mediators. Targets antigen-presenting cells (APCs) such as macrophages and monocytes and inhibits their release of pro-inflammatory cytokines including granulocyte-macrophage colony-stimulating factor /GM-CSF, granulocyte colony-stimulating factor/G-CSF, IL-1 alpha, IL-1 beta, IL-6, IL-8 and TNF-alpha. Also interferes with antigen presentation by reducing the expression of MHC-class II and co-stimulatory molecules, thereby inhibiting their ability to induce T cell activation. In addition, controls the inflammatory response of macrophages by reprogramming essential metabolic pathways including mTOR signaling. The protein is Interleukin-10 (Il10) of Rattus norvegicus (Rat).